Consider the following 950-residue polypeptide: Protein translocase subunit SecA (950 aa).

Residues Q87, 105–109 (GEGKT), and D524 contribute to the ATP site. Positions 908 to 932 (GAAPVPAEARNPNDPSTWGKVGRNE) are disordered. The Zn(2+) site is built by C934, C936, C945, and H946.

Belongs to the SecA family. Monomer and homodimer. Part of the essential Sec protein translocation apparatus which comprises SecA, SecYEG and auxiliary proteins SecDF-YajC and YidC. Zn(2+) serves as cofactor.

It localises to the cell inner membrane. Its subcellular location is the cytoplasm. It catalyses the reaction ATP + H2O + cellular proteinSide 1 = ADP + phosphate + cellular proteinSide 2.. Part of the Sec protein translocase complex. Interacts with the SecYEG preprotein conducting channel. Has a central role in coupling the hydrolysis of ATP to the transfer of proteins into and across the cell membrane, serving both as a receptor for the preprotein-SecB complex and as an ATP-driven molecular motor driving the stepwise translocation of polypeptide chains across the membrane. This chain is Protein translocase subunit SecA, found in Bradyrhizobium sp. (strain BTAi1 / ATCC BAA-1182).